A 401-amino-acid chain; its full sequence is Golgi membrane protein 1 (401 aa).

M1 is modified (N-acetylmethionine). Residues 1–12 (MMGLGNGRRSMK) are Cytoplasmic-facing. The helical; Signal-anchor for type II membrane protein transmembrane segment at 13–35 (SPPLVLAALVACIIVLGFNYWIA) threads the bilayer. The Lumenal segment spans residues 36-401 (SSRSVDLQTR…DQREKRNHTL (366 aa)). A coiled-coil region spans residues 40-205 (VDLQTRIMEL…QRQQLQALSE (166 aa)). N-linked (GlcNAc...) (complex) asparagine glycosylation is present at N109. The N-linked (GlcNAc...) asparagine glycan is linked to N144. The disordered stretch occupies residues 178-401 (TKKGNEAVAS…DQREKRNHTL (224 aa)). At S187 the chain carries Phosphoserine. Residues 228-238 (LGNSKSQTPAP) are compositionally biased toward polar residues. Basic and acidic residues-rich tracts occupy residues 244–255 (LDSKRQVEKEET) and 264–285 (EPQRDRLPQEPGREQVVEDRPV). Gly residues predominate over residues 286-295 (GGRGFGGAGE). A compositionally biased stretch (polar residues) spans 298 to 312 (QTPQVQAALSVSQEN). S309 is subject to Phosphoserine; by FAM20C. Residues 350 to 360 (DYNMDENEAES) are compositionally biased toward acidic residues. Over residues 381–395 (EDQKRDTINLLDQRE) the composition is skewed to basic and acidic residues. N-linked (GlcNAc...) asparagine glycosylation is present at N398.

It belongs to the GOLM family. As to quaternary structure, interacts with DYM. Post-translationally, glycosylated. In terms of processing, phosphorylation sites are present in the extracellular medium. In terms of tissue distribution, widely expressed. Highly expressed in colon, prostate, trachea and stomach. Expressed at lower level in testis, muscle, lymphoid tissues, white blood cells and spleen. Predominantly expressed by cells of the epithelial lineage. Expressed at low level in normal liver. Expression significantly increases in virus (HBV, HCV) infected liver. Expression does not increase in liver disease due to non-viral causes (alcohol-induced liver disease, autoimmune hepatitis). Increased expression in hepatocytes appears to be a general feature of advanced liver disease. In liver tissue from patients with adult giant-cell hepatitis (GCH), it is strongly expressed in hepatocytes-derived syncytial giant cells. Constitutively expressed by biliary epithelial cells but not by hepatocytes.

The protein resides in the golgi apparatus. It localises to the cis-Golgi network membrane. Unknown. Cellular response protein to viral infection. This Homo sapiens (Human) protein is Golgi membrane protein 1 (GOLM1).